The chain runs to 160 residues: MPASNSCSPPGGDHKPPPPPPSHPSPSPTPSYPPPPNNGGGYYPPPPDNTSHTPPPPSSTPPNNGGGGNDGGSGNTGGGNSDDGSDGGHSICPSGLYSSAQCCSTDVLGIADLNCKPPSRTPKDGSDFAKICSNTGSEARCCVIPVAGQALLCEDVVGAN.

4 disulfides stabilise this stretch: Cys-92–Cys-141, Cys-102–Cys-132, Cys-103–Cys-115, and Cys-142–Cys-153.

The protein belongs to the cerato-ulmin hydrophobin family. As to quaternary structure, homodimer. Homodimers further self-assemble to form highly ordered films at water-air interfaces through intermolecular interactions.

It localises to the secreted. It is found in the cell wall. Aerial growth, conidiation, and dispersal of filamentous fungi in the environment rely upon a capability of their secreting small amphipathic proteins called hydrophobins (HPBs) with low sequence identity. Class I can self-assemble into an outermost layer of rodlet bundles on aerial cell surfaces, conferring cellular hydrophobicity that supports fungal growth, development and dispersal; whereas Class II form highly ordered films at water-air interfaces through intermolecular interactions but contribute nothing to the rodlet structure. The protein is Class II hydrophobin 8 of Trichoderma asperellum (strain ATCC 204424 / CBS 433.97 / NBRC 101777).